The following is a 981-amino-acid chain: GPI ethanolamine phosphate transferase 1 (981 aa).

Residues 1 to 6 (MAGSSR) lie on the Cytoplasmic side of the membrane. The helical transmembrane segment at 7–27 (IGFMAIAVAFHLVYILSIFDI) threads the bilayer. At 28–464 (YFVSPIVTGM…LQTYDWLFLR (437 aa)) the chain is on the lumenal side. Asn148, Asn211, and Asn295 each carry an N-linked (GlcNAc...) asparagine glycan. A helical membrane pass occupies residues 465 to 485 (ALITIGYLGWMAYATTTVLSL). At 486–496 (YVVKESMSPQR) the chain is on the cytoplasmic side. Residues 497-517 (TLLGSAFFLSLLVALYSSFII) form a helical membrane-spanning segment. Residues 518-519 (SK) lie on the Lumenal side of the membrane. The chain crosses the membrane as a helical span at residues 520 to 540 (SPPAYYLYAFFPVLFWEEVYA). Topologically, residues 541–560 (RRANVAKGFQALFGHVKSGG) are cytoplasmic. A helical transmembrane segment spans residues 561–581 (AVVALVFNVVLYLGVIQSLAL). The Lumenal segment spans residues 582–587 (AYIHRE). Residues 588-608 (ILTGLFVLGAFWPMTQGISFL) form a helical membrane-spanning segment. Residues 609-611 (RSH) are Cytoplasmic-facing. The chain crosses the membrane as a helical span at residues 612-632 (LFLSMLWFFSCLAMSTFTLLP). Residues 633–638 (AMKVED) are Lumenal-facing. Residues 639-659 (IPLIMAGGGLMTFVGLAYLVL) form a helical membrane-spanning segment. Topologically, residues 660–681 (EDFILSDVSSSKTKLKRLHTSR) are cytoplasmic. The chain crosses the membrane as a helical span at residues 682-702 (TLLGIQVGLIILAMLVTHSSA). The Lumenal portion of the chain corresponds to 703–708 (TSLQAK). The chain crosses the membrane as a helical span at residues 709–729 (LGLPKGNQIVGWFVLVTSLLM). The Cytoplasmic segment spans residues 730-744 (PLAYRLQPNSHYMHR). A helical membrane pass occupies residues 745–767 (LAIIFLTCAPTFVILTISYEGLF). Topologically, residues 768–819 (YVAFSITLLSWVRLEYAVDAFTQEKAKKQATVAGSQQHTPSTFRPLSLSDAR) are lumenal. A helical transmembrane segment spans residues 820–840 (IALFFMVLLQSAFFSTGNIAS). At 841 to 862 (ISSFSLESVSRLIPVFDPFSQG) the chain is on the cytoplasmic side. The chain crosses the membrane as a helical span at residues 863 to 883 (ALLILKIIIPFFLISANLGVL). The Lumenal segment spans residues 884–892 (NKRLGVAPS). A helical membrane pass occupies residues 893–913 (AIFMVVLTASDVLTLYFFWVV). Over 914–929 (KDEGSWLEIGSTITHF) the chain is Cytoplasmic. The helical transmembrane segment at 930-950 (AIASFLCVFVAALEFVSAAFI) threads the bilayer. The Lumenal segment spans residues 951 to 981 (AGIEVEDTKSAALTSASTKADEKVPPVAGAE).

This sequence belongs to the PIGG/PIGN/PIGO family. PIGN subfamily.

The protein localises to the endoplasmic reticulum membrane. It participates in glycolipid biosynthesis; glycosylphosphatidylinositol-anchor biosynthesis. In terms of biological role, ethanolamine phosphate transferase involved in glycosylphosphatidylinositol-anchor biosynthesis. Transfers ethanolamine phosphate to the first alpha-1,4-linked mannose of the glycosylphosphatidylinositol precursor of GPI-anchor. This is GPI ethanolamine phosphate transferase 1 (MCD4) from Gibberella zeae (strain ATCC MYA-4620 / CBS 123657 / FGSC 9075 / NRRL 31084 / PH-1) (Wheat head blight fungus).